We begin with the raw amino-acid sequence, 186 residues long: Cytochrome b6-f complex iron-sulfur subunit (186 aa).

A helical transmembrane segment spans residues 16 to 38; sequence LLSFVTGGAIAATTAATLYPVVL. Residues 74-163 enclose the Rieske domain; sequence GEPVLTLGLD…ATVSDDKVLI (90 aa). Residues Cys109, His111, Cys127, and His130 each contribute to the [2Fe-2S] cluster site. Cys114 and Cys129 are disulfide-bonded.

Belongs to the Rieske iron-sulfur protein family. In terms of assembly, the 4 large subunits of the cytochrome b6-f complex are cytochrome b6, subunit IV (17 kDa polypeptide, PetD), cytochrome f and the Rieske protein, while the 4 small subunits are PetG, PetL, PetM and PetN. The complex functions as a dimer. It depends on [2Fe-2S] cluster as a cofactor.

It localises to the cell inner membrane. The enzyme catalyses 2 oxidized [plastocyanin] + a plastoquinol + 2 H(+)(in) = 2 reduced [plastocyanin] + a plastoquinone + 4 H(+)(out). In terms of biological role, component of the cytochrome b6-f complex, which mediates electron transfer between photosystem II (PSII) and photosystem I (PSI), cyclic electron flow around PSI, and state transitions. This Gloeobacter violaceus (strain ATCC 29082 / PCC 7421) protein is Cytochrome b6-f complex iron-sulfur subunit.